We begin with the raw amino-acid sequence, 999 residues long: uncharacterized protein (999 aa).

Residues 45 to 128 (NSNNIGNGNG…TPTITPSSPS (84 aa)) show a composition bias toward low complexity. A disordered region spans residues 45-129 (NSNNIGNGNG…PTITPSSPSV (85 aa)). A coiled-coil region spans residues 723 to 767 (YQQSQQQQSQQQQQQQQQQQQQQQQQQQQQQQQQQQQQQQQQQQQ). A compositionally biased stretch (low complexity) spans 873 to 887 (NDINNANNSNNNNNN). The interval 873–904 (NDINNANNSNNNNNNQSQVLLSPNRNKDGTLN) is disordered. The helical transmembrane segment at 976 to 996 (LFSLVLILAFIWFFFEIYFFF) threads the bilayer.

It localises to the membrane. This is an uncharacterized protein from Dictyostelium discoideum (Social amoeba).